A 456-amino-acid polypeptide reads, in one-letter code: Iroquois-class homeodomain protein irx-2 (456 aa).

The segment at residues 110-172 is a DNA-binding region (homeobox; TALE-type); sequence DPAYRKNATR…NARRRLKKEN (63 aa). Disordered stretches follow at residues 172 to 214, 246 to 320, and 434 to 456; these read NKMT…AEDE, CESG…PASK, and RPTNFESKKDPSEVCTVGVQPYP. 2 stretches are compositionally biased toward basic and acidic residues: residues 192–205 and 246–256; these read GERVKEEQSEKAQD and CESGSESKEKY. Residues 257–269 are compositionally biased toward acidic residues; that stretch reads DDDEDEEEGDEED. Over residues 291 to 318 the composition is skewed to polar residues; it reads NHQQDGSPRNSNKTSLDNGMSPSSQTPA.

Belongs to the TALE/IRO homeobox family. In terms of tissue distribution, expressed in the neural plate in overlapping patterns with other irx members, which all share an anterior border of expression. Also expressed in the placodes. Broadly expressed in the tailbud rhombencephalon (hindbrain). Outside the nervous system and at tailbud stages, expressed in the developing otic vesicle, branchial arches, prospective heart region and pronephros.

It localises to the nucleus. Acts partially redundantly with other irx members in neural patterning. Required for formation of the posterior forebrain, midbrain, hindbrain, and to a lesser extent, spinal cord. Acts early in neural plate development to induce expression of some but not all proneural genes, and specify a neural precursor state. Also up-regulates repressors that prevent neuronal differentiation. Patterns the neuroectoderm in both the anterior/posterior and dorsal/ventral axes. Probably dispensable for pronephric kidney development. This Xenopus tropicalis (Western clawed frog) protein is Iroquois-class homeodomain protein irx-2.